The following is a 110-amino-acid chain: Putative membrane protein insertion efficiency factor (110 aa).

It belongs to the UPF0161 family.

Its subcellular location is the cell inner membrane. In terms of biological role, could be involved in insertion of integral membrane proteins into the membrane. The sequence is that of Putative membrane protein insertion efficiency factor from Campylobacter hominis (strain ATCC BAA-381 / DSM 21671 / CCUG 45161 / LMG 19568 / NCTC 13146 / CH001A).